Reading from the N-terminus, the 81-residue chain is Cytotoxin 5 (81 aa).

Positions 1 to 21 (MKTLLLTLVVVTIVCLDLGYT) are cleaved as a signal peptide. Cystine bridges form between cysteine 24–cysteine 42, cysteine 35–cysteine 59, cysteine 63–cysteine 74, and cysteine 75–cysteine 80.

It belongs to the three-finger toxin family. Short-chain subfamily. Type IA cytotoxin sub-subfamily. In terms of assembly, monomer in solution; Homodimer and oligomer in the presence of negatively charged lipids forming a pore with a size ranging between 20 and 30 Angstroms. In terms of tissue distribution, expressed by the venom gland.

The protein localises to the secreted. Its subcellular location is the target cell membrane. Shows cytolytic activity on many different cells by forming pore in lipid membranes. In vivo, increases heart rate or kills the animal by cardiac arrest. In addition, it binds to heparin with high affinity, interacts with Kv channel-interacting protein 1 (KCNIP1) in a calcium-independent manner, and binds to integrin alpha-V/beta-3 (ITGAV/ITGB3) with moderate affinity. The chain is Cytotoxin 5 from Naja atra (Chinese cobra).